The primary structure comprises 362 residues: UDP-3-O-acylglucosamine N-acyltransferase 1 (362 aa).

The active-site Proton acceptor is His-258.

The protein belongs to the transferase hexapeptide repeat family. LpxD subfamily. In terms of assembly, homotrimer.

The enzyme catalyses a UDP-3-O-[(3R)-3-hydroxyacyl]-alpha-D-glucosamine + a (3R)-hydroxyacyl-[ACP] = a UDP-2-N,3-O-bis[(3R)-3-hydroxyacyl]-alpha-D-glucosamine + holo-[ACP] + H(+). It participates in bacterial outer membrane biogenesis; LPS lipid A biosynthesis. Its function is as follows. Catalyzes the N-acylation of UDP-3-O-acylglucosamine using 3-hydroxyacyl-ACP as the acyl donor. Is involved in the biosynthesis of lipid A, a phosphorylated glycolipid that anchors the lipopolysaccharide to the outer membrane of the cell. The protein is UDP-3-O-acylglucosamine N-acyltransferase 1 of Nitrobacter winogradskyi (strain ATCC 25391 / DSM 10237 / CIP 104748 / NCIMB 11846 / Nb-255).